Here is a 386-residue protein sequence, read N- to C-terminus: Indole-3-acetate O-methyltransferase 1 (386 aa).

Tyr30 is a binding site for S-adenosyl-L-methionine. Substrate-binding positions include Tyr30 and 33–37; that span reads NSQAQ. S-adenosyl-L-methionine-binding positions include Gly72, 72-73, Asn78, 108-111, Asp110, 152-154, and 169-171; these read GC, FSDL, SFY, and AFS. Position 170–174 (170–174) interacts with substrate; the sequence is FSLHW. 6 residues coordinate Mg(2+): Asn191, Val195, Arg277, Asp278, Phe280, and Asn281. A substrate-binding site is contributed by Ser334.

This sequence belongs to the methyltransferase superfamily. SABATH family. In terms of assembly, homodimer. The cofactor is Mg(2+). Expressed in seedling roots and leaves. Expressed in the stigma, funiculus, and vascular bundles in sepals, petals and stamens.

It catalyses the reaction (indol-3-yl)acetate + S-adenosyl-L-methionine = methyl (indol-3-yl)acetate + S-adenosyl-L-homocysteine. In terms of biological role, catalyzes the methylation of the free carboxyl end of the plant hormone indole-3-acetic acid (IAA). Converts IAA to IAA methyl ester (MeIAA). Regulates IAA activities by IAA methylation. Methylation of IAA plays an important role in regulating plant development and auxin homeostasis. Required for correct leaf pattern formation. MeIAA seems to be an inactive form of IAA. This chain is Indole-3-acetate O-methyltransferase 1 (IAMT1), found in Arabidopsis thaliana (Mouse-ear cress).